The chain runs to 116 residues: Alpha-amylase inhibitor 5 (116 aa).

5 disulfides stabilise this stretch: Cys4-Cys55, Cys18-Cys44, Cys27-Cys77, Cys45-Cys95, and Cys57-Cys106.

Belongs to the protease inhibitor I6 (cereal trypsin/alpha-amylase inhibitor) family.

Its subcellular location is the secreted. Alpha-amylase inhibitor. The sequence is that of Alpha-amylase inhibitor 5 from Sorghum bicolor (Sorghum).